The primary structure comprises 104 residues: Large ribosomal subunit protein uL15z (104 aa).

This sequence belongs to the universal ribosomal protein uL15 family.

In Arabidopsis thaliana (Mouse-ear cress), this protein is Large ribosomal subunit protein uL15z (RPL27AA).